The chain runs to 443 residues: Adenylate cyclase (443 aa).

Helical transmembrane passes span 47–69 (VLTI…QLAT), 74–93 (WYIA…VPLL), 98–120 (GLVA…GWDV), 124–143 (AGAQ…LVGI), 148–167 (LAVG…EFLV), and 180–202 (SVSF…WFAL). Topologically, residues 203 to 443 (RDTARAEAVM…RGAEPRTAGV (241 aa)) are cytoplasmic. In terms of domain architecture, Guanylate cyclase spans 251–378 (SVLFADIVGF…DAVNVASRME (128 aa)). 2 residues coordinate Mg(2+): aspartate 256 and aspartate 300.

It belongs to the adenylyl cyclase class-4/guanylyl cyclase family. In terms of assembly, homodimer. Can also exist as monomer. Requires Mg(2+) as cofactor. Mn(2+) serves as cofactor.

The protein resides in the cell membrane. The catalysed reaction is ATP = 3',5'-cyclic AMP + diphosphate. This Mycobacterium bovis (strain ATCC BAA-935 / AF2122/97) protein is Adenylate cyclase (cya).